The chain runs to 141 residues: Nucleoside diphosphate kinase (141 aa).

Residues Lys11, Phe59, Arg87, Thr93, Arg104, and Asn114 each coordinate ATP. The Pros-phosphohistidine intermediate role is filled by His117.

This sequence belongs to the NDK family. As to quaternary structure, homotetramer. Mg(2+) serves as cofactor.

Its subcellular location is the cytoplasm. The enzyme catalyses a 2'-deoxyribonucleoside 5'-diphosphate + ATP = a 2'-deoxyribonucleoside 5'-triphosphate + ADP. It catalyses the reaction a ribonucleoside 5'-diphosphate + ATP = a ribonucleoside 5'-triphosphate + ADP. Its function is as follows. Major role in the synthesis of nucleoside triphosphates other than ATP. The ATP gamma phosphate is transferred to the NDP beta phosphate via a ping-pong mechanism, using a phosphorylated active-site intermediate. In Photorhabdus laumondii subsp. laumondii (strain DSM 15139 / CIP 105565 / TT01) (Photorhabdus luminescens subsp. laumondii), this protein is Nucleoside diphosphate kinase.